Reading from the N-terminus, the 182-residue chain is NADH-quinone oxidoreductase subunit I (182 aa).

4Fe-4S ferredoxin-type domains follow at residues 52–82 (LTRDPDGEERCVACNLCAVACPVGCISLQKA) and 92–121 (DFFRINFSRCIFCGLCEEACPTTAIQLTPD). [4Fe-4S] cluster is bound by residues Cys-62, Cys-65, Cys-68, Cys-72, Cys-101, Cys-104, Cys-107, and Cys-111.

Belongs to the complex I 23 kDa subunit family. NDH-1 is composed of 13 different subunits. Subunits NuoA, H, J, K, L, M, N constitute the membrane sector of the complex. [4Fe-4S] cluster is required as a cofactor.

Its subcellular location is the cell inner membrane. The enzyme catalyses a quinone + NADH + 5 H(+)(in) = a quinol + NAD(+) + 4 H(+)(out). In terms of biological role, NDH-1 shuttles electrons from NADH, via FMN and iron-sulfur (Fe-S) centers, to quinones in the respiratory chain. The immediate electron acceptor for the enzyme in this species is believed to be ubiquinone. Couples the redox reaction to proton translocation (for every two electrons transferred, four hydrogen ions are translocated across the cytoplasmic membrane), and thus conserves the redox energy in a proton gradient. Required for plants roots colonization. This Pseudomonas fluorescens protein is NADH-quinone oxidoreductase subunit I (nuoI).